A 408-amino-acid chain; its full sequence is Bifunctional enzyme IspD/IspF (408 aa).

The segment at 1 to 247 (MNAPFEKDRR…GPAMTELPDI (247 aa)) is 2-C-methyl-D-erythritol 4-phosphate cytidylyltransferase. The tract at residues 248–408 (RVGNGYDVHG…TVAYPGSLGN (161 aa)) is 2-C-methyl-D-erythritol 2,4-cyclodiphosphate synthase. Positions 254 and 256 each coordinate a divalent metal cation. Residues 254–256 (DVH) and 280–281 (HS) each bind 4-CDP-2-C-methyl-D-erythritol 2-phosphate. His288 contributes to the a divalent metal cation binding site. 4-CDP-2-C-methyl-D-erythritol 2-phosphate contacts are provided by residues 302–304 (DIG), 378–381 (TTNE), Phe385, and Arg388.

The protein in the N-terminal section; belongs to the IspD/TarI cytidylyltransferase family. IspD subfamily. In the C-terminal section; belongs to the IspF family. Requires a divalent metal cation as cofactor.

It carries out the reaction 2-C-methyl-D-erythritol 4-phosphate + CTP + H(+) = 4-CDP-2-C-methyl-D-erythritol + diphosphate. It catalyses the reaction 4-CDP-2-C-methyl-D-erythritol 2-phosphate = 2-C-methyl-D-erythritol 2,4-cyclic diphosphate + CMP. Its pathway is isoprenoid biosynthesis; isopentenyl diphosphate biosynthesis via DXP pathway; isopentenyl diphosphate from 1-deoxy-D-xylulose 5-phosphate: step 2/6. It functions in the pathway isoprenoid biosynthesis; isopentenyl diphosphate biosynthesis via DXP pathway; isopentenyl diphosphate from 1-deoxy-D-xylulose 5-phosphate: step 4/6. In terms of biological role, bifunctional enzyme that catalyzes the formation of 4-diphosphocytidyl-2-C-methyl-D-erythritol from CTP and 2-C-methyl-D-erythritol 4-phosphate (MEP) (IspD), and catalyzes the conversion of 4-diphosphocytidyl-2-C-methyl-D-erythritol 2-phosphate (CDP-ME2P) to 2-C-methyl-D-erythritol 2,4-cyclodiphosphate (ME-CPP) with a corresponding release of cytidine 5-monophosphate (CMP) (IspF). The sequence is that of Bifunctional enzyme IspD/IspF from Chelativorans sp. (strain BNC1).